Here is a 183-residue protein sequence, read N- to C-terminus: Crossover junction endodeoxyribonuclease RuvC (183 aa).

Residues D16, E75, and D147 contribute to the active site. The Mg(2+) site is built by D16, E75, and D147.

This sequence belongs to the RuvC family. In terms of assembly, homodimer which binds Holliday junction (HJ) DNA. The HJ becomes 2-fold symmetrical on binding to RuvC with unstacked arms; it has a different conformation from HJ DNA in complex with RuvA. In the full resolvosome a probable DNA-RuvA(4)-RuvB(12)-RuvC(2) complex forms which resolves the HJ. It depends on Mg(2+) as a cofactor.

Its subcellular location is the cytoplasm. It carries out the reaction Endonucleolytic cleavage at a junction such as a reciprocal single-stranded crossover between two homologous DNA duplexes (Holliday junction).. Its function is as follows. The RuvA-RuvB-RuvC complex processes Holliday junction (HJ) DNA during genetic recombination and DNA repair. Endonuclease that resolves HJ intermediates. Cleaves cruciform DNA by making single-stranded nicks across the HJ at symmetrical positions within the homologous arms, yielding a 5'-phosphate and a 3'-hydroxyl group; requires a central core of homology in the junction. The consensus cleavage sequence is 5'-(A/T)TT(C/G)-3'. Cleavage occurs on the 3'-side of the TT dinucleotide at the point of strand exchange. HJ branch migration catalyzed by RuvA-RuvB allows RuvC to scan DNA until it finds its consensus sequence, where it cleaves and resolves the cruciform DNA. This Azoarcus sp. (strain BH72) protein is Crossover junction endodeoxyribonuclease RuvC.